A 400-amino-acid chain; its full sequence is Elongation factor Tu (400 aa).

The region spanning 10–209 is the tr-type G domain; that stretch reads KPHVNIGTIG…EVDNYIPTPE (200 aa). Residues 19–26 are G1; the sequence is GHVDHGKT. 19–26 contributes to the GTP binding site; it reads GHVDHGKT. Residue threonine 26 coordinates Mg(2+). Residues 60 to 64 are G2; it reads GITIN. The interval 81 to 84 is G3; that stretch reads DCPG. Residues 81–85 and 136–139 each bind GTP; these read DCPGH and NKCD. A G4 region spans residues 136–139; the sequence is NKCD. Positions 174–176 are G5; sequence SAL.

The protein belongs to the TRAFAC class translation factor GTPase superfamily. Classic translation factor GTPase family. EF-Tu/EF-1A subfamily. As to quaternary structure, monomer.

It is found in the cytoplasm. The enzyme catalyses GTP + H2O = GDP + phosphate + H(+). In terms of biological role, GTP hydrolase that promotes the GTP-dependent binding of aminoacyl-tRNA to the A-site of ribosomes during protein biosynthesis. The polypeptide is Elongation factor Tu (Ruminiclostridium cellulolyticum (strain ATCC 35319 / DSM 5812 / JCM 6584 / H10) (Clostridium cellulolyticum)).